The primary structure comprises 185 residues: MTDSIKKDAKARMGKSIESLRNELAKIRTGRAHTSLLDHVMVEYYGSDVPISQVANVNVEDARTLTVTPWEKTMVSKVEKAIMTSDLGLNPSSMGTVIRVPMPALTEERRRDLVKVVRGEAENARVAIRNIRRDANNALKALVKGKEISEDDERRAQDEIQKLTDSHIEEVDKVLAEKEKELMEV.

The protein belongs to the RRF family.

It localises to the cytoplasm. Responsible for the release of ribosomes from messenger RNA at the termination of protein biosynthesis. May increase the efficiency of translation by recycling ribosomes from one round of translation to another. In Thioalkalivibrio sulfidiphilus (strain HL-EbGR7), this protein is Ribosome-recycling factor.